We begin with the raw amino-acid sequence, 448 residues long: Probable cytosolic Fe-S cluster assembly factor Bm6838 (448 aa).

[4Fe-4S] cluster contacts are provided by Cys27, Cys66, Cys69, Cys72, Cys170, Cys226, Cys370, and Cys374.

Belongs to the NARF family.

Functionally, component of the cytosolic iron-sulfur (Fe/S) protein assembly machinery. Required for maturation of extramitochondrial Fe/S proteins. The sequence is that of Probable cytosolic Fe-S cluster assembly factor Bm6838 from Brugia malayi (Filarial nematode worm).